We begin with the raw amino-acid sequence, 1526 residues long: Myosin type-2 heavy chain 1 (1526 aa).

A Myosin N-terminal SH3-like domain is found at 22 to 73 (DDKRWVWISDPETAFTKAWIKEDLPDKKYVVRYNNSRDEKIVGEDEIDPVNP). Residues 77–755 (DRVNDMAELT…VLAELEERRV (679 aa)) form the Myosin motor domain. Residue 170-177 (GESGAGKT) coordinates ATP. 2 actin-binding regions span residues 634-656 (LNQLMNQFNSTQPHFIRCIVPNE) and 734-748 (RIGVSKIFFKAGVLA). Positions 758 to 787 (LQRLMTMLQTRIRGFLQRKIFQKRLKDIQA) constitute an IQ domain. Positions 875-1244 (ALDKEEILRR…SLTKQVNELS (370 aa)) form a coiled coil. Serine 1044 is modified (phosphoserine).

Belongs to the TRAFAC class myosin-kinesin ATPase superfamily. Myosin family. Binds to cdc4 and rlc1.

Functionally, required for cell division. It is a component of the cdc12 'spot', a structure thought to mark the site of septation. May work in conjunction with myo3. In Schizosaccharomyces pombe (strain 972 / ATCC 24843) (Fission yeast), this protein is Myosin type-2 heavy chain 1 (myo2).